The following is a 232-amino-acid chain: Megakaryocyte and platelet inhibitory receptor G6b (232 aa).

The N-terminal stretch at Met1–Gly17 is a signal peptide. Residues Asn18–Lys140 are Extracellular-facing. N-linked (GlcNAc...) asparagine glycosylation is found at Asn32 and Asn112. Residues Val141 to Trp161 form a helical membrane-spanning segment. Residues Trp162–Val232 lie on the Cytoplasmic side of the membrane. 2 short sequence motifs (ITIM motif) span residues Leu200–Leu205 and Thr226–Val231. Residue Tyr202 is modified to Phosphotyrosine.

In terms of assembly, interacts (via ITIM motif) with PTPN6 and PTPN11. Binds to heparin. Post-translationally, N-glycosylated. May be O-glycosylated. In terms of processing, phosphorylated.

The protein localises to the cell membrane. In terms of biological role, inhibitory receptor that acts as a critical regulator of hematopoietic lineage differentiation, megakaryocyte function and platelet production. Inhibits platelet aggregation and activation by agonists such as ADP and collagen-related peptide. This regulation of megakaryocate function as well as platelet production ann activation is done through the inhibition (via the 2 ITIM motifs) of the receptors CLEC1B and GP6:FcRgamma signaling. Appears to operate in a calcium-independent manner. The protein is Megakaryocyte and platelet inhibitory receptor G6b of Rattus norvegicus (Rat).